Reading from the N-terminus, the 351-residue chain is Phosphoribosylformylglycinamidine cyclo-ligase (351 aa).

This sequence belongs to the AIR synthase family.

The protein resides in the cytoplasm. It carries out the reaction 2-formamido-N(1)-(5-O-phospho-beta-D-ribosyl)acetamidine + ATP = 5-amino-1-(5-phospho-beta-D-ribosyl)imidazole + ADP + phosphate + H(+). Its pathway is purine metabolism; IMP biosynthesis via de novo pathway; 5-amino-1-(5-phospho-D-ribosyl)imidazole from N(2)-formyl-N(1)-(5-phospho-D-ribosyl)glycinamide: step 2/2. This Burkholderia vietnamiensis (strain G4 / LMG 22486) (Burkholderia cepacia (strain R1808)) protein is Phosphoribosylformylglycinamidine cyclo-ligase.